The primary structure comprises 343 residues: Ferredoxin--NADP reductase (343 aa).

FAD contacts are provided by C18, D37, Q45, Y50, V90, F125, D290, and T331.

This sequence belongs to the ferredoxin--NADP reductase type 2 family. Homodimer. The cofactor is FAD.

The enzyme catalyses 2 reduced [2Fe-2S]-[ferredoxin] + NADP(+) + H(+) = 2 oxidized [2Fe-2S]-[ferredoxin] + NADPH. In Parvibaculum lavamentivorans (strain DS-1 / DSM 13023 / NCIMB 13966), this protein is Ferredoxin--NADP reductase.